The primary structure comprises 244 residues: Rho-related GTP-binding protein RhoE (244 aa).

Glycine 30–threonine 37 serves as a coordination point for GTP. The Effector region signature appears at tyrosine 52–tyrosine 60. GTP contacts are provided by residues aspartate 77 to serine 81 and cysteine 135 to aspartate 138. A Cysteine methyl ester modification is found at cysteine 241. Cysteine 241 carries the S-farnesyl cysteine lipid modification. Residues threonine 242 to methionine 244 constitute a propeptide, removed in mature form.

The protein belongs to the small GTPase superfamily. Rho family. Binds ROCK1. Interacts with UBXD5. Ubiquitous.

The protein localises to the golgi apparatus membrane. Binds GTP but lacks intrinsic GTPase activity and is resistant to Rho-specific GTPase-activating proteins. This Homo sapiens (Human) protein is Rho-related GTP-binding protein RhoE (RND3).